A 133-amino-acid polypeptide reads, in one-letter code: Mediator of RNA polymerase II transcription subunit 10 (133 aa).

Over residues methionine 1 to phenylalanine 13 the composition is skewed to polar residues. Positions methionine 1–lysine 28 are disordered. Residues serine 15–lysine 28 show a composition bias toward basic and acidic residues.

It belongs to the Mediator complex subunit 10 family. As to quaternary structure, component of the Mediator complex.

It localises to the nucleus. In terms of biological role, component of the Mediator complex, a coactivator involved in the regulated transcription of nearly all RNA polymerase II-dependent genes. Mediator functions as a bridge to convey information from gene-specific regulatory proteins to the basal RNA polymerase II transcription machinery. Mediator is recruited to promoters by direct interactions with regulatory proteins and serves as a scaffold for the assembly of a functional preinitiation complex with RNA polymerase II and the general transcription factors. This chain is Mediator of RNA polymerase II transcription subunit 10 (NUT2), found in Phaeosphaeria nodorum (strain SN15 / ATCC MYA-4574 / FGSC 10173) (Glume blotch fungus).